The chain runs to 314 residues: Probable cell division protein WhiA (314 aa).

Residues 274-308 (SLKELGEMISTGPISKSGVNHRLRKLNELADKIRS) constitute a DNA-binding region (H-T-H motif).

This sequence belongs to the WhiA family.

Involved in cell division and chromosome segregation. In Staphylococcus haemolyticus (strain JCSC1435), this protein is Probable cell division protein WhiA.